The following is a 106-amino-acid chain: ATP-dependent Clp protease adapter protein ClpS (106 aa).

The protein belongs to the ClpS family. As to quaternary structure, binds to the N-terminal domain of the chaperone ClpA.

In terms of biological role, involved in the modulation of the specificity of the ClpAP-mediated ATP-dependent protein degradation. In Vibrio vulnificus (strain CMCP6), this protein is ATP-dependent Clp protease adapter protein ClpS.